The primary structure comprises 284 residues: Trimeric intracellular cation channel type B (284 aa).

At 1 to 15 (MESFSELSLQFSQLS) the chain is on the lumenal side. The chain crosses the membrane as a helical span at residues 16–32 (MFPFFETAHYLTSVMSA). Residues 33–44 (REQAGAVDVASR) are Cytoplasmic-facing. A helical transmembrane segment spans residues 45–68 (SPLASWFSSMLYCFGGGILSSILL). At 69–79 (AEPPVGILSNT) the chain is on the lumenal side. The chain crosses the membrane as a helical span at residues 80 to 99 (TSIILASAVWYMVYYFPYDL). Residues 100–102 (FYN) are Cytoplasmic-facing. Residues 103–121 (CFFFLPIRLILAGMKEVTR) form a helical membrane-spanning segment. A 1,2-diacyl-sn-glycero-3-phospho-(1D-myo-inositol-4,5-bisphosphate)-binding residues include K117 and R121. The Lumenal segment spans residues 122 to 139 (TWKILSGVAHAHSHYKDA). A helical membrane pass occupies residues 140 to 157 (MLVMITIGWARGAGGGLI). At 158-178 (SNFEQLVRGVWKPESNEFLKM) the chain is on the cytoplasmic side. The chain crosses the membrane as a helical span at residues 179–196 (SYPVKVTLIGAVLFTLQH). Residues 197-204 (GQYLPISR) lie on the Lumenal side of the membrane. The helical transmembrane segment at 205–225 (HNLMFIYTLFLILIKVTMMLT) threads the bilayer. The Cytoplasmic portion of the chain corresponds to 226–284 (RSTASPFLPLETSLQHILFSRQQIPAEVRESPSSSGDKGKPSKKTLDKDSGEQDNKKDN). Positions 250 to 284 (PAEVRESPSSSGDKGKPSKKTLDKDSGEQDNKKDN) are disordered. Basic and acidic residues predominate over residues 262–284 (DKGKPSKKTLDKDSGEQDNKKDN).

Belongs to the TMEM38 family. As to quaternary structure, homotrimer; conformation seems to be controled by binding to diacylglycerol (DAG).

The protein resides in the endoplasmic reticulum membrane. The enzyme catalyses K(+)(in) = K(+)(out). Its activity is regulated as follows. Channel activity is activated by increased cytosolic Ca(2+) levels and blocked by luminal high Ca(2+) levels. In terms of biological role, intracellular monovalent cation channel required for maintenance of rapid intracellular calcium release. Acts as a potassium counter-ion channel that functions in synchronization with calcium release from intracellular stores. Activated by increased cytosolic Ca(2+) levels. The chain is Trimeric intracellular cation channel type B (tmem38b) from Xenopus tropicalis (Western clawed frog).